The sequence spans 104 residues: AVIToxin-VAR2 (104 aa).

The first 19 residues, 1–19 (MRSLLCAPLLLLLLSAGES), serve as a signal peptide directing secretion. Disulfide bonds link Cys-26–Cys-38, Cys-32–Cys-50, Cys-37–Cys-78, Cys-60–Cys-86, and Cys-80–Cys-96.

This sequence belongs to the AVIT (prokineticin) family. As to expression, expressed by the venom gland.

The protein resides in the secreted. Its function is as follows. Potent agonist for both PKR1/PROKR1 and PKR2/PROKR2. Potently contracts gastrointestinal (GI) smooth muscle. The chain is AVIToxin-VAR2 from Varanus varius (Lace monitor lizard).